The primary structure comprises 353 residues: Putative glycosyltransferase TagX (353 aa).

Belongs to the glycosyltransferase 2 family.

The protein is Putative glycosyltransferase TagX (tagX) of Staphylococcus aureus (strain COL).